A 218-amino-acid chain; its full sequence is Ribose-5-phosphate isomerase A (218 aa).

Residues 28–31 (TGST), 81–84 (DSAD), and 94–97 (KGKG) contribute to the substrate site. The active-site Proton acceptor is the Glu103. Lys121 lines the substrate pocket.

The protein belongs to the ribose 5-phosphate isomerase family. Homodimer.

It catalyses the reaction aldehydo-D-ribose 5-phosphate = D-ribulose 5-phosphate. Its pathway is carbohydrate degradation; pentose phosphate pathway; D-ribose 5-phosphate from D-ribulose 5-phosphate (non-oxidative stage): step 1/1. Its function is as follows. Catalyzes the reversible conversion of ribose-5-phosphate to ribulose 5-phosphate. The protein is Ribose-5-phosphate isomerase A of Blochmanniella pennsylvanica (strain BPEN).